The chain runs to 117 residues: G antigen 5 (117 aa).

Residues 1–117 are disordered; it reads MSWRGRSTYY…PEEGEKQSQC (117 aa). Composition is skewed to acidic residues over residues 32–45 and 87–96; these read FSDE…EEGE and ECEDGPDGQE. Over residues 103-117 the composition is skewed to basic and acidic residues; sequence EEVKTPEEGEKQSQC.

This sequence belongs to the GAGE family. As to expression, expressed in a variety of tumor tissues but not in normal tissues, except testis.

This is G antigen 5 (GAGE5) from Homo sapiens (Human).